The chain runs to 361 residues: 5-formaminoimidazole-4-carboxamide-1-(beta)-D-ribofuranosyl 5'-monophosphate synthetase (361 aa).

5-amino-1-(5-phospho-beta-D-ribosyl)imidazole-4-carboxamide is bound by residues histidine 27 and serine 94. The ATP-grasp domain maps to 116-348 (RRILRWESER…MGQRIAREIK (233 aa)). ATP-binding positions include 156-166 (KFPGARGGRGY), 199-202 (EEYV), and glutamate 230. Position 258 (asparagine 258) interacts with 5-amino-1-(5-phospho-beta-D-ribosyl)imidazole-4-carboxamide. Mg(2+)-binding residues include glutamine 297 and glutamate 310.

It belongs to the phosphohexose mutase family. As to quaternary structure, homohexamer. Dimer of trimers. Requires Mg(2+) as cofactor. Mn(2+) serves as cofactor.

It carries out the reaction 5-amino-1-(5-phospho-beta-D-ribosyl)imidazole-4-carboxamide + formate + ATP = 5-formamido-1-(5-phospho-D-ribosyl)imidazole-4-carboxamide + ADP + phosphate. It functions in the pathway purine metabolism; IMP biosynthesis via de novo pathway; 5-formamido-1-(5-phospho-D-ribosyl)imidazole-4-carboxamide from 5-amino-1-(5-phospho-D-ribosyl)imidazole-4-carboxamide (formate route): step 1/1. With respect to regulation, inhibited by ADP. In terms of biological role, catalyzes the ATP- and formate-dependent formylation of 5-aminoimidazole-4-carboxamide-1-beta-d-ribofuranosyl 5'-monophosphate (AICAR) to 5-formaminoimidazole-4-carboxamide-1-beta-d-ribofuranosyl 5'-monophosphate (FAICAR) in the absence of folates. The polypeptide is 5-formaminoimidazole-4-carboxamide-1-(beta)-D-ribofuranosyl 5'-monophosphate synthetase (Methanocaldococcus jannaschii (strain ATCC 43067 / DSM 2661 / JAL-1 / JCM 10045 / NBRC 100440) (Methanococcus jannaschii)).